Reading from the N-terminus, the 233-residue chain is Lipoprotein-releasing system ATP-binding protein LolD (233 aa).

The 228-residue stretch at L6–E233 folds into the ABC transporter domain. G42–S49 is an ATP binding site.

The protein belongs to the ABC transporter superfamily. Lipoprotein translocase (TC 3.A.1.125) family. In terms of assembly, the complex is composed of two ATP-binding proteins (LolD) and two transmembrane proteins (LolC and LolE).

The protein resides in the cell inner membrane. Part of the ABC transporter complex LolCDE involved in the translocation of mature outer membrane-directed lipoproteins, from the inner membrane to the periplasmic chaperone, LolA. Responsible for the formation of the LolA-lipoprotein complex in an ATP-dependent manner. Such a release is dependent of the sorting-signal (absence of an Asp at position 2 of the mature lipoprotein) and of LolA. In Escherichia coli (strain K12), this protein is Lipoprotein-releasing system ATP-binding protein LolD.